We begin with the raw amino-acid sequence, 200 residues long: Dephospho-CoA kinase (200 aa).

The 197-residue stretch at V4–G200 folds into the DPCK domain. A12–T17 provides a ligand contact to ATP.

It belongs to the CoaE family.

It localises to the cytoplasm. It catalyses the reaction 3'-dephospho-CoA + ATP = ADP + CoA + H(+). It participates in cofactor biosynthesis; coenzyme A biosynthesis; CoA from (R)-pantothenate: step 5/5. Catalyzes the phosphorylation of the 3'-hydroxyl group of dephosphocoenzyme A to form coenzyme A. In Lactobacillus acidophilus (strain ATCC 700396 / NCK56 / N2 / NCFM), this protein is Dephospho-CoA kinase.